The primary structure comprises 299 residues: Beta-lactamase VEB-1 (299 aa).

The N-terminal stretch at 1–23 (MKIVKRILLVLLSLFFTIVYSNA) is a signal peptide. Catalysis depends on serine 68, which acts as the Nucleophile; acyl-ester intermediate. Residues lysine 71, serine 131, and glutamate 167 each coordinate a beta-lactam. Glutamate 167 acts as the Proton acceptor in catalysis.

This sequence belongs to the class-A beta-lactamase family.

It catalyses the reaction a beta-lactam + H2O = a substituted beta-amino acid. Inhibited by the beta-lactamase-blocking agent clavulanic acid. In terms of biological role, class A beta-lactamase which confers resistance to the beta-lactam antibiotics, including penicillins and cephalosporins, in E.coli strain JM109. Acts via hydrolysis of the beta-lactam ring. Has penicillin-, and cephalosporin-hydrolyzing activities. This Pseudomonas aeruginosa protein is Beta-lactamase VEB-1.